Reading from the N-terminus, the 437-residue chain is Alpha-galactosidase 3 (437 aa).

The first 30 residues, 1–30 (MVIMKKMKDSVLFLVVGLFSLSVLVSQSIA), serve as a signal peptide directing secretion. 2 disulfide bridges follow: Cys85/Cys117 and Cys165/Cys195. A glycan (N-linked (GlcNAc...) asparagine) is linked at Asn88. Substrate-binding positions include 115–116 (DD) and Lys191. Asp193 acts as the Nucleophile in catalysis. N-linked (GlcNAc...) asparagine glycosylation occurs at Asn214. Substrate contacts are provided by residues 226–230 (EWGVD), Arg244, and Asp248. Catalysis depends on Asp248, which acts as the Proton donor. N-linked (GlcNAc...) asparagine glycosylation is found at Asn250, Asn315, and Asn408.

This sequence belongs to the glycosyl hydrolase 27 family. In terms of assembly, homodimer.

It is found in the secreted. The protein resides in the cell wall. Its subcellular location is the extracellular space. The protein localises to the apoplast. It localises to the vacuole. The catalysed reaction is Hydrolysis of terminal, non-reducing alpha-D-galactose residues in alpha-D-galactosides, including galactose oligosaccharides, galactomannans and galactolipids.. May regulate leaf (and possibly other organ) development by functioning in cell wall loosening and cell wall expansion. The chain is Alpha-galactosidase 3 from Arabidopsis thaliana (Mouse-ear cress).